The following is an 885-amino-acid chain: MSFFAKLQGSDSESSSGSESEESILSGSEGERQDKKLAAQKKQQKSKASMFLNSEESESEEESSDEDEEEMSDSDDERQAVANKFLNDAASSDEESEEEDKIIVLSAKDKRFAEMEAAIHSIQNAVKNTDWVLASSELDKLFRFIARHLVTIVASPIPAEGHIPPRFLETLVSLEADVAKTLAAEKSAPKKMAPAKAKAVNGIRQTLKKKSKEFDGVLKTYNEDPEAYTAAYEKANAAPAAPKPKKAAVTTPGEGEDDEFMTIGKGGKTLNLTADGVFKTLREIFEARGRKNTDRAETIKILTKLLEVSETTYQKIRVLLALVPARLDYSQHLVSIPQESWVTALQEFDQLISILIAEPDYLVQETVGEYDDLVERTPEVVDGKKQKVLIAGSLISLLESLDSELTKTLQHTDAHEKGDEYIDRLKHEAPLYTTIVKAQTLFEREQLSDNIARTVIRRLEHIYAKPDIIIEHFESKATQAAAGLKSEITPFDVKRDASGVIHDLAVFIYQSDAPVLRARAILYHIFNQALHGRYHQARDLLLMSHLQDTISHADVTTQILYNRAVMQVGLAAFRLGFIPECQTILSEMFSTLRQKELLAQSVQRYNIQLSPEQELLEKRRLLPFHMHLNVELLEAAYLTSCMLVEIPLLASVDTEEQRRRVTSKTFKRLLDMADRQAFMGPPENTRDHIIKASQALQAGEWEKARDLIVSIKVWSLLDNAAEVKDILAKKIQEEGLRTSLFTYAAYYDSLSLSHLASTFNLPVGRITSIISRMIYTDELAASLDQIDGVVIFHRVEQSEVQRLAQQLAERTASMLEQNEKTLDVKLGNQGQGQDRDTRAVGGEGGRQQGERRGGRGTYRGRGGRGGRGGFNQGLGTTMGRRVTAQ.

A disordered region spans residues 1-81 (MSFFAKLQGS…SDSDDERQAV (81 aa)). Positions 9–28 (GSDSESSSGSESEESILSGS) are enriched in low complexity. Residues 55 to 76 (EESESEEESSDEDEEEMSDSDD) show a composition bias toward acidic residues. Positions 624-797 (FHMHLNVELL…GVVIFHRVEQ (174 aa)) constitute a PCI domain. Residues 822–885 (LDVKLGNQGQ…TTMGRRVTAQ (64 aa)) form a disordered region. Positions 855–872 (RGTYRGRGGRGGRGGFNQ) are enriched in gly residues.

This sequence belongs to the eIF-3 subunit C family. As to quaternary structure, component of the eukaryotic translation initiation factor 3 (eIF-3) complex.

It is found in the cytoplasm. Functionally, component of the eukaryotic translation initiation factor 3 (eIF-3) complex, which is involved in protein synthesis of a specialized repertoire of mRNAs and, together with other initiation factors, stimulates binding of mRNA and methionyl-tRNAi to the 40S ribosome. The eIF-3 complex specifically targets and initiates translation of a subset of mRNAs involved in cell proliferation. The sequence is that of Eukaryotic translation initiation factor 3 subunit C from Cryptococcus neoformans var. neoformans serotype D (strain B-3501A) (Filobasidiella neoformans).